A 288-amino-acid chain; its full sequence is ATP synthase gamma chain (288 aa).

It belongs to the ATPase gamma chain family. F-type ATPases have 2 components, CF(1) - the catalytic core - and CF(0) - the membrane proton channel. CF(1) has five subunits: alpha(3), beta(3), gamma(1), delta(1), epsilon(1). CF(0) has three main subunits: a, b and c.

It localises to the cell inner membrane. Its function is as follows. Produces ATP from ADP in the presence of a proton gradient across the membrane. The gamma chain is believed to be important in regulating ATPase activity and the flow of protons through the CF(0) complex. This chain is ATP synthase gamma chain, found in Rickettsia bellii (strain OSU 85-389).